A 598-amino-acid polypeptide reads, in one-letter code: Nuclear receptor subfamily 4 group A member 1 (598 aa).

Disordered regions lie at residues 1-50 (MPCI…PTAL) and 120-159 (LDETLSSSGSDYYGSPCSAPSPSTPSFQPPQLSPWDGSFG). Composition is skewed to low complexity over residues 37-50 (LASPEAAPTAPTAL) and 134-145 (SPCSAPSPSTPS). Positions 171–466 (RAWTEQLPKA…PAEGKLIFCS (296 aa)) are required for nuclear import. Positions 264–339 (EGRCAVCGDN…VGMVKEVVRT (76 aa)) form a DNA-binding region, nuclear receptor. 2 consecutive NR C4-type zinc fingers follow at residues 267 to 287 (CAVCGDNASCQHYGVRTCEGC) and 303 to 327 (CLANKDCPVDKRRRNRCQFCRFQKC). The tract at residues 268-354 (AVCGDNASCQ…RRGRLPSKPK (87 aa)) is required for binding NBRE-containing DNA. The interval 299–361 (AKYICLANKD…KPKQPPDASP (63 aa)) is required for the interaction with RXRA. Serine 341 carries the post-translational modification Phosphoserine; by PKA. The disordered stretch occupies residues 341–361 (SLKGRRGRLPSKPKQPPDASP). Serine 351 is modified (phosphoserine; by PKA, RPS6KA1 and RPS6KA3). The NR LBD domain occupies 360-595 (SPANLLTSLV…PIVDKIFMDT (236 aa)). The tract at residues 521 to 544 (PRRVEELQNRIASCLKEHVSAVAG) is binds lipopolysaccharide. The interval 584 to 595 (PPPIVDKIFMDT) is AF-2.

Belongs to the nuclear hormone receptor family. NR4 subfamily. As to quaternary structure, binds the NGFI-B response element (NBRE) as a monomer. Binds the Nur response element (NurRE), consisting of two inverse NBRE-related octanucleotide repeats separated by 6 base-pairs, as a dimer. Interacts (via N-terminus) with NLRP3 (via LRR repeat domain); the interaction is direct, requires binding of NR4A1/Nur77 to NBRE-containing dsDNA and lipopolysaccharide, and leads to non-canonical NLRP3 inflammasome activation. Interacts with GADD45GIP1. Interacts with STK11. Heterodimer (via DNA-binding domain) with RXRA (via C-terminus); DNA-binding of the heterodimer is enhanced by 9-cis retinoic acid. Competes for the RXRA interaction with EP300 and thereby attenuates EP300 mediated acetylation of RXRA. Interacts with NCOA1. Interacts with NCOA2. Interacts with NCOA3. Zn(2+) serves as cofactor. Phosphorylated at Ser-351 by RPS6KA1 and RPS6KA3 in response to mitogenic or stress stimuli. In terms of processing, acetylated by p300/CBP, acetylation increases stability. Deacetylated by HDAC1.

The protein localises to the cytoplasm. It is found in the cytosol. Its subcellular location is the nucleus. The protein resides in the mitochondrion. Functionally, orphan nuclear receptor. Binds the NGFI-B response element (NBRE) 5'-AAAGGTCA-3'. Binds 9-cis-retinoic acid outside of its ligand-binding (NR LBD) domain. Participates in energy homeostasis by sequestrating the kinase STK11 in the nucleus, thereby attenuating cytoplasmic AMPK activation. Regulates the inflammatory response in macrophages by regulating metabolic adaptations during inflammation, including repressing the transcription of genes involved in the citric acid cycle (TCA). Inhibits NF-kappa-B signaling by binding to low-affinity NF-kappa-B binding sites, such as at the IL2 promoter. May act concomitantly with NR4A2 in regulating the expression of delayed-early genes during liver regeneration. Plays a role in the vascular response to injury. In the cytosol, upon its detection of both bacterial lipopolysaccharide (LPS) and NBRE-containing mitochondrial DNA released by GSDMD pores during pyroptosis, it promotes non-canonical NLRP3 inflammasome activation by stimulating association of NLRP3 and NEK7. The sequence is that of Nuclear receptor subfamily 4 group A member 1 (NR4A1) from Canis lupus familiaris (Dog).